The following is a 342-amino-acid chain: Aldo-keto reductase pigE (342 aa).

Positions 1 to 27 (MGSISPKTRFPIVLGAGLIGSPGLFEG) are cleaved as a signal peptide. Asp52 is an NADP(+) binding site. Catalysis depends on Tyr57, which acts as the Proton donor. The NADP(+) site is built by Gln182 and Arg236. N-linked (GlcNAc...) asparagine glycosylation occurs at Asn271.

The protein belongs to the aldo/keto reductase family. Aldo/keto reductase 2 subfamily.

The protein operates within secondary metabolite biosynthesis. Its function is as follows. Aldo-keto reductase; part of the gene cluster that mediates the biosynthesis of azaphilone pigments (MonAzPs), a complex mixture of compounds with a common azaphilone skeleton very widely used as food colorants. Within the pathway, pigE is involved in the dehydration of the C-11 alcohol followed by the reduction of the C6(7) double bond which increases the electrophilicity of the C-5 ketone of the resulting acyl benzopyran and allows the intramolecular Knoevenagel aldol condensation with the C-20 enol of the side chain to yield the characteristic linear tricyclic carbon skeletons of the yellow pigments. The first step of the pathway is performed by the nrPKS pigA that forms the hexaketide precursor from successive condensations of five malonyl-CoA units, with a simple acetyl-CoA starter unit. The role of esterase pigG is not clear, but it may play at most a supplementary role in the formation of the benzaldehyde produced by the pigA nrPKS. This very reactive benzaldehyde is intercepted by the pigC ketoreductase that to provide the first stable enzyme-free MonAzPs intermediate, 6-(4-hydroxy-2-oxopentyl)-3-methyl-2,4-dioxocyclohexane carbaldehyde, also known as M7PKS-1. The FAD-dependent monooxygenase pigN hydroxylates M7PKS-1 at C-4, which triggers the formation of the pyran ring. PigJ, pigK and pigD are involved in the acetylation of the pyran ring. PigJ and pigK form the two subunits of a dedicated fungal FAS that produces the side chain fatty acyl moiety of MonAzPs and pigD transfers the fatty acyl chain to the C-4 alcohol. PigM and pigO are involved in the elimination of the omega-1 alcohol. PigM acts as an O-acetyltransferase that synthesizes the putative O-11 acetyl intermediate whereas pigO eliminates acetic acid to yield an intermediate with a C10(11) double bond. The dehydration of the C-11 alcohol followed by the reduction of the C6(7) double bond by the NAD(P)H-dependent oxidoreductase pigE increases the electrophilicity of the C-5 ketone of the resulting acyl benzopyran. This in turn sets up the C-5 ketone for an intramolecular Knoevenagel aldol condensation with the C-20 enol of the side chain. This condensation affords the characteristic linear tricyclic carbon skeletons of the yellow pigments that serve as the common precursors for the classical yellow pigments monascin and ankaflavin, orange pigments rubopunctatin and monascorubrin, and red pigments ribropunctamine and monascorubramine. The FAD-dependent oxidoreductase pigF is especially invoved in the biosynthesis of orange and red pigments via desaturation of C6(7). The polypeptide is Aldo-keto reductase pigE (Monascus ruber (Mold)).